Reading from the N-terminus, the 210-residue chain is 23.5 kDa heat shock protein, mitochondrial (210 aa).

The N-terminal 20 residues, 1–20 (MASSSALALRRLLSSSTVAV), are a transit peptide targeting the mitochondrion. Residues 102 to 210 (MGASGVRRGW…RNNIRHINVD (109 aa)) form the sHSP domain.

The protein belongs to the small heat shock protein (HSP20) family. In terms of assembly, may form oligomeric structures.

The protein resides in the mitochondrion. This is 23.5 kDa heat shock protein, mitochondrial (HSP23.5) from Arabidopsis thaliana (Mouse-ear cress).